A 199-amino-acid chain; its full sequence is Glycerol-3-phosphate acyltransferase (199 aa).

5 helical membrane-spanning segments follow: residues 3–23 (YILI…YLLP), 50–70 (VIGF…VLVF), 77–97 (IHYT…PVFL), 110–130 (GVFF…WISI), and 136–156 (YVSL…FFFN).

Belongs to the PlsY family. In terms of assembly, probably interacts with PlsX.

It localises to the cell inner membrane. The enzyme catalyses an acyl phosphate + sn-glycerol 3-phosphate = a 1-acyl-sn-glycero-3-phosphate + phosphate. It participates in lipid metabolism; phospholipid metabolism. Functionally, catalyzes the transfer of an acyl group from acyl-phosphate (acyl-PO(4)) to glycerol-3-phosphate (G3P) to form lysophosphatidic acid (LPA). This enzyme utilizes acyl-phosphate as fatty acyl donor, but not acyl-CoA or acyl-ACP. The sequence is that of Glycerol-3-phosphate acyltransferase from Pseudothermotoga lettingae (strain ATCC BAA-301 / DSM 14385 / NBRC 107922 / TMO) (Thermotoga lettingae).